Consider the following 198-residue polypeptide: dTTP/UTP pyrophosphatase (198 aa).

Catalysis depends on Asp69, which acts as the Proton acceptor.

It belongs to the Maf family. YhdE subfamily. It depends on a divalent metal cation as a cofactor.

It localises to the cytoplasm. The enzyme catalyses dTTP + H2O = dTMP + diphosphate + H(+). It catalyses the reaction UTP + H2O = UMP + diphosphate + H(+). Functionally, nucleoside triphosphate pyrophosphatase that hydrolyzes dTTP and UTP. May have a dual role in cell division arrest and in preventing the incorporation of modified nucleotides into cellular nucleic acids. This chain is dTTP/UTP pyrophosphatase, found in Idiomarina loihiensis (strain ATCC BAA-735 / DSM 15497 / L2-TR).